Consider the following 886-residue polypeptide: Putative leucine-rich repeat receptor-like serine/threonine-protein kinase At2g14440 (886 aa).

A signal peptide spans 1–23; that stretch reads METRSKLMLLACATFSIISLVKS. Topologically, residues 24 to 528 are extracellular; the sequence is QNQQGFISLY…KHQPKSWLVA (505 aa). Residues Asn49, Asn69, Asn232, Asn236, Asn259, Asn292, Asn434, Asn447, Asn458, and Asn471 are each glycosylated (N-linked (GlcNAc...) asparagine). LRR repeat units lie at residues 413 to 436, 437 to 460, 461 to 483, and 485 to 507; these read RIISLDLSSSGLTGVITPSIQNLT, MLRELDLSNNNLTGVIPPSLQNLT, MLRELDLSNNNLTGEVPEFLATI, and PLLVIHLRGNNLRGSVPQALQDR. Residues 529–549 form a helical membrane-spanning segment; that stretch reads IVASISCVAVTIIVLVLIFIF. Topologically, residues 550 to 886 are cytoplasmic; the sequence is RRRKSSTRKV…TFISDIPSAR (337 aa). The region spanning 581–850 is the Protein kinase domain; it reads NNFEVVLGKG…NMTRVAHELN (270 aa). ATP contacts are provided by residues 587–595 and Lys608; that span reads LGKGGFGVV. At Tyr653 the chain carries Phosphotyrosine. Catalysis depends on Asp705, which acts as the Proton acceptor. Ser739 bears the Phosphoserine mark. 2 positions are modified to phosphothreonine: Thr740 and Thr745. Position 753 is a phosphotyrosine (Tyr753). A disordered region spans residues 863–886; it reads SQDQNSSKSSGHTVTFISDIPSAR. Over residues 865–878 the composition is skewed to polar residues; the sequence is DQNSSKSSGHTVTF.

It belongs to the protein kinase superfamily. Ser/Thr protein kinase family.

Its subcellular location is the cell membrane. It catalyses the reaction L-seryl-[protein] + ATP = O-phospho-L-seryl-[protein] + ADP + H(+). The catalysed reaction is L-threonyl-[protein] + ATP = O-phospho-L-threonyl-[protein] + ADP + H(+). The sequence is that of Putative leucine-rich repeat receptor-like serine/threonine-protein kinase At2g14440 from Arabidopsis thaliana (Mouse-ear cress).